The following is a 347-amino-acid chain: tRNA N6-adenosine threonylcarbamoyltransferase (347 aa).

Fe cation-binding residues include His-115 and His-119. Substrate is bound by residues 138–142, Asp-171, Gly-184, and Asn-277; that span reads LVSGG. Position 305 (Asp-305) interacts with Fe cation.

The protein belongs to the KAE1 / TsaD family. Fe(2+) is required as a cofactor.

Its subcellular location is the cytoplasm. The enzyme catalyses L-threonylcarbamoyladenylate + adenosine(37) in tRNA = N(6)-L-threonylcarbamoyladenosine(37) in tRNA + AMP + H(+). Its function is as follows. Required for the formation of a threonylcarbamoyl group on adenosine at position 37 (t(6)A37) in tRNAs that read codons beginning with adenine. Is involved in the transfer of the threonylcarbamoyl moiety of threonylcarbamoyl-AMP (TC-AMP) to the N6 group of A37, together with TsaE and TsaB. TsaD likely plays a direct catalytic role in this reaction. In Polaromonas sp. (strain JS666 / ATCC BAA-500), this protein is tRNA N6-adenosine threonylcarbamoyltransferase.